Here is a 253-residue protein sequence, read N- to C-terminus: Probable transcriptional regulatory protein Synpcc7942_1017 (253 aa).

The protein belongs to the TACO1 family.

The protein localises to the cytoplasm. This Synechococcus elongatus (strain ATCC 33912 / PCC 7942 / FACHB-805) (Anacystis nidulans R2) protein is Probable transcriptional regulatory protein Synpcc7942_1017.